We begin with the raw amino-acid sequence, 1373 residues long: DNA-directed RNA polymerase subunit beta (1373 aa).

This sequence belongs to the RNA polymerase beta chain family. In terms of assembly, the RNAP catalytic core consists of 2 alpha, 1 beta, 1 beta' and 1 omega subunit. When a sigma factor is associated with the core the holoenzyme is formed, which can initiate transcription.

It carries out the reaction RNA(n) + a ribonucleoside 5'-triphosphate = RNA(n+1) + diphosphate. Its function is as follows. DNA-dependent RNA polymerase catalyzes the transcription of DNA into RNA using the four ribonucleoside triphosphates as substrates. This is DNA-directed RNA polymerase subunit beta from Rhodopseudomonas palustris (strain BisB18).